The chain runs to 867 residues: Coiled-coil domain-containing protein 178 (867 aa).

4 coiled-coil regions span residues 153 to 204 (DEKC…KIDS), 233 to 414 (WHLE…ENQY), 445 to 470 (ACTKLTEDNKKLEIDINKITVKTNES), and 662 to 696 (MIFYAKINELNEELKAKEEEKKSFDQTLEILKNKF).

The chain is Coiled-coil domain-containing protein 178 (CCDC178) from Homo sapiens (Human).